Reading from the N-terminus, the 248-residue chain is Triosephosphate isomerase (248 aa).

Substrate is bound at residue 9–11 (NWK). Catalysis depends on His94, which acts as the Electrophile. The active-site Proton acceptor is the Glu166. Residues Gly172, Ser212, and 233–234 (GG) contribute to the substrate site.

The protein belongs to the triosephosphate isomerase family. As to quaternary structure, homodimer.

It localises to the cytoplasm. The enzyme catalyses D-glyceraldehyde 3-phosphate = dihydroxyacetone phosphate. Its pathway is carbohydrate biosynthesis; gluconeogenesis. The protein operates within carbohydrate degradation; glycolysis; D-glyceraldehyde 3-phosphate from glycerone phosphate: step 1/1. Involved in the gluconeogenesis. Catalyzes stereospecifically the conversion of dihydroxyacetone phosphate (DHAP) to D-glyceraldehyde-3-phosphate (G3P). The polypeptide is Triosephosphate isomerase (Alkaliphilus oremlandii (strain OhILAs) (Clostridium oremlandii (strain OhILAs))).